The following is a 456-amino-acid chain: RuvB-like 1 (456 aa).

Lys2 participates in a covalent cross-link: Glycyl lysine isopeptide (Lys-Gly) (interchain with G-Cter in SUMO2). Gly70–Thr77 is an ATP binding site. Lys225 is covalently cross-linked (Glycyl lysine isopeptide (Lys-Gly) (interchain with G-Cter in SUMO1); alternate). Lys225 participates in a covalent cross-link: Glycyl lysine isopeptide (Lys-Gly) (interchain with G-Cter in SUMO2); alternate. A Glycyl lysine isopeptide (Lys-Gly) (interchain with G-Cter in SUMO2) cross-link involves residue Lys445. N6-acetyllysine is present on Lys453.

The protein belongs to the RuvB family. In terms of assembly, forms homohexameric rings. Can form a dodecamer with RUVBL2 made of two stacked hexameric rings; however, even though RUVBL1 and RUVBL2 are present in equimolar ratio, the oligomeric status of each hexamer is not known. Oligomerization may regulate binding to nucleic acids and conversely, binding to nucleic acids may affect the dodecameric assembly. Interaction of the complex with DHX34 results in conformational changes of the N-terminus of the RUVBL2 subunits, resulting in loss of nucleotide binding ability and ATP hydrolysis of the complex. Interacts with the transcriptional activation domain of MYC. Component of the RNA polymerase II holoenzyme complex. May also act to bridge the LEF1/TCF1-CTNNB1 complex and TBP. Component of the NuA4 histone acetyltransferase complex which contains the catalytic subunit KAT5/TIP60 and the subunits EP400, TRRAP/PAF400, BRD8/SMAP, EPC1, DMAP1/DNMAP1, RUVBL1/TIP49, RUVBL2, ING3, actin, ACTL6A/BAF53A, MORF4L1/MRG15, MORF4L2/MRGX, MRGBP, YEATS4/GAS41, VPS72/YL1 and MEAF6. The NuA4 complex interacts with MYC and the adenovirus E1A protein. RUVBL1 interacts with EP400. Component of a NuA4-related complex which contains EP400, TRRAP/PAF400, SRCAP, BRD8/SMAP, EPC1, DMAP1/DNMAP1, RUVBL1/TIP49, RUVBL2, actin, ACTL6A/BAF53A, VPS72 and YEATS4/GAS41. Component of the BAF53 complex, at least composed of ACTL6A/BAF53A, RUVBL1/TIP49, SMARCA2/BRM, and TRRAP/PAF400. Component of some MLL1/MLL complex, at least composed of the core components KMT2A/MLL1, ASH2L, HCFC1/HCF1, WDR5 and RBBP5, as well as the facultative components BACC1, CHD8, E2F6, HSP70, INO80C, KANSL1, LAS1L, MAX, MCRS1, MGA, MYST1/MOF, PELP1, PHF20, PRP31, RING2, RUVB1/TIP49A, RUVB2/TIP49B, SENP3, TAF1, TAF4, TAF6, TAF7, TAF9 and TEX10. Associates with alpha and gamma tubulins, particularly during metaphase and early anaphase. Interacts with NPAT. Component of the chromatin-remodeling INO80 complex; specifically part of a complex module associated with the helicase ATP-binding and the helicase C-terminal domain of INO80. Interacts with IGHMBP2. Interacts with OFD1. Interacts with HINT1. Component of a complex with USP49 and PSMC5. Component of a SWR1-like complex. Component of the R2TP complex composed at least of RUVBL1, RUVBL2, RPAP3 and PIHD1. Component of the PAQosome complex which is responsible for the biogenesis of several protein complexes and which consists of R2TP complex members RUVBL1, RUVBL2, RPAP3 and PIH1D1, URI complex members PFDN2, PFDN6, PDRG1, UXT and URI1 as well as ASDURF, POLR2E and DNAAF10/WDR92. Interacts with PIH1D1. Interacts with ITFG1. Interacts with WAC; WAC positively regulates MTOR activity by promoting the assembly of the TTT complex composed of TELO2, TTI1 and TTI2 and the RUVBL complex composed of RUVBL1 and RUVBL2 into the TTT-RUVBL complex which leads to the dimerization of the mTORC1 complex and its subsequent activation. The RUVBL1/RUVBL2 complex interacts with ZNHIT1 (via HIT-type zinc finger), ZNHIT3 (via HIT-type zinc finger), ZNHIT6 (via HIT-type zinc finger) and DDX59/ZNHIT5 (via HIT-type zinc finger) in the presence of ADP. Interacts with NOPCHAP1; the interaction is direct and disrupted upon ATP binding. Interacts with SMG1. Interacts with NOP2, NOP56 and NUFIP1. (Microbial infection) Interacts with Mumps L polymerase; this interaction regulates the viral transcription. As to expression, ubiquitously expressed with high expression in heart, skeletal muscle and testis.

It is found in the nucleus matrix. The protein localises to the nucleus. Its subcellular location is the nucleoplasm. It localises to the cytoplasm. The protein resides in the membrane. It is found in the cytoskeleton. The protein localises to the microtubule organizing center. Its subcellular location is the centrosome. It localises to the dynein axonemal particle. The catalysed reaction is ATP + H2O = ADP + phosphate + H(+). Functionally, possesses single-stranded DNA-stimulated ATPase and ATP-dependent DNA helicase (3' to 5') activity; hexamerization is thought to be critical for ATP hydrolysis and adjacent subunits in the ring-like structure contribute to the ATPase activity. Component of the NuA4 histone acetyltransferase complex which is involved in transcriptional activation of select genes principally by acetylation of nucleosomal histones H4 and H2A. This modification may both alter nucleosome-DNA interactions and promote interaction of the modified histones with other proteins which positively regulate transcription. This complex may be required for the activation of transcriptional programs associated with oncogene and proto-oncogene mediated growth induction, tumor suppressor mediated growth arrest and replicative senescence, apoptosis, and DNA repair. The NuA4 complex ATPase and helicase activities seem to be, at least in part, contributed by the association of RUVBL1 and RUVBL2 with EP400. NuA4 may also play a direct role in DNA repair when recruited to sites of DNA damage. Component of a SWR1-like complex that specifically mediates the removal of histone H2A.Z/H2AZ1 from the nucleosome. Proposed core component of the chromatin remodeling INO80 complex which exhibits DNA- and nucleosome-activated ATPase activity and catalyzes ATP-dependent nucleosome sliding. Plays an essential role in oncogenic transformation by MYC and also modulates transcriptional activation by the LEF1/TCF1-CTNNB1 complex. Essential for cell proliferation. May be able to bind plasminogen at cell surface and enhance plasminogen activation. The polypeptide is RuvB-like 1 (Homo sapiens (Human)).